Reading from the N-terminus, the 370-residue chain is tRNA-specific 2-thiouridylase MnmA (370 aa).

ATP is bound by residues 24-31 (AMSGGVDS) and Leu50. Residue Cys119 is the Nucleophile of the active site. Cys119 and Cys215 are joined by a disulfide. Position 143 (Gly143) interacts with ATP. Residues 165 to 167 (KDQ) are interaction with tRNA. Cys215 serves as the catalytic Cysteine persulfide intermediate.

This sequence belongs to the MnmA/TRMU family.

The protein resides in the cytoplasm. The catalysed reaction is S-sulfanyl-L-cysteinyl-[protein] + uridine(34) in tRNA + AH2 + ATP = 2-thiouridine(34) in tRNA + L-cysteinyl-[protein] + A + AMP + diphosphate + H(+). Its function is as follows. Catalyzes the 2-thiolation of uridine at the wobble position (U34) of tRNA, leading to the formation of s(2)U34. The sequence is that of tRNA-specific 2-thiouridylase MnmA from Wolbachia sp. subsp. Drosophila simulans (strain wRi).